A 515-amino-acid polypeptide reads, in one-letter code: UPF0053 protein BUsg_314 (515 aa).

7 helical membrane-spanning segments follow: residues 14-34, 49-69, 79-99, 125-145, 150-170, 185-205, and 207-227; these read LTLVVLEVVLGIDNLIFVAIL, IGLGLALIMRLALLSLISWVV, NFFSLSIRDLILLIGGLFLLF, FWAVVIQIVVLDAVFSLDAII, MVNQLLIMMIAVVLATILMLL, VVVLCLSFLLMIGFSLVAEAL, and FYIPKGYLYAAIGFSILIEIF. CBS domains lie at 309–368 and 372–432; these read MTPR…NIDV and ASQI…DADE.

The protein belongs to the UPF0053 family.

It localises to the cell membrane. In Buchnera aphidicola subsp. Schizaphis graminum (strain Sg), this protein is UPF0053 protein BUsg_314.